Reading from the N-terminus, the 496-residue chain is L-carnitine dehydrogenase/betainyl-CoA thioesterase (496 aa).

Positions 1–335 (MTTITKAACI…KRLWEKGGSP (335 aa)) are L-carnitine dehydrogenase. 11–16 (GGGVIG) provides a ligand contact to NAD(+). The interval 336-496 (SKSLDASGPL…GAGRHVGQKR (161 aa)) is betainyl-CoA thioesterase.

In the N-terminal section; belongs to the 3-hydroxyacyl-CoA dehydrogenase family. L-carnitine dehydrogenase subfamily. This sequence in the C-terminal section; belongs to the betainyl-CoA thioesterase family. As to quaternary structure, homodimer.

It is found in the cytoplasm. The catalysed reaction is carnitine + NAD(+) = 3-dehydrocarnitine + NADH + H(+). It catalyses the reaction N,N,N-trimethylglycyl-CoA + H2O = glycine betaine + CoA + H(+). The protein operates within amine and polyamine metabolism; carnitine metabolism. Multifunctional enzyme that catalyzes the NAD(+)-dependent oxidation of L-carnitine to 3-dehydrocarnitine and the cleavage of betainyl-CoA (N,N,N-trimethylglycyl-CoA) into glycine betaine and coenzyme A. Can also hydrolyze L-carnitinyl-CoA, but with much lower efficiency. Is involved in a L-carnitine degradation pathway that allows R.meliloti to grow on L-carnitine as the sole source of carbon and nitrogen. This chain is L-carnitine dehydrogenase/betainyl-CoA thioesterase, found in Rhizobium meliloti (strain 1021) (Ensifer meliloti).